A 231-amino-acid chain; its full sequence is ATP phosphoribosyltransferase (231 aa).

The protein belongs to the ATP phosphoribosyltransferase family. Short subfamily. Heteromultimer composed of HisG and HisZ subunits.

The protein localises to the cytoplasm. It catalyses the reaction 1-(5-phospho-beta-D-ribosyl)-ATP + diphosphate = 5-phospho-alpha-D-ribose 1-diphosphate + ATP. It participates in amino-acid biosynthesis; L-histidine biosynthesis; L-histidine from 5-phospho-alpha-D-ribose 1-diphosphate: step 1/9. Its function is as follows. Catalyzes the condensation of ATP and 5-phosphoribose 1-diphosphate to form N'-(5'-phosphoribosyl)-ATP (PR-ATP). Has a crucial role in the pathway because the rate of histidine biosynthesis seems to be controlled primarily by regulation of HisG enzymatic activity. The sequence is that of ATP phosphoribosyltransferase from Sinorhizobium medicae (strain WSM419) (Ensifer medicae).